Here is a 306-residue protein sequence, read N- to C-terminus: Acetyl-coenzyme A carboxylase carboxyl transferase subunit beta (306 aa).

Residues 25 to 294 (VWTKCDSCGQ…PSPDAPREAV (270 aa)) enclose the CoA carboxyltransferase N-terminal domain. 4 residues coordinate Zn(2+): cysteine 29, cysteine 32, cysteine 48, and cysteine 51. The C4-type zinc finger occupies 29 to 51 (CDSCGQVLYRAELERNLEVCPKC). The segment at 286 to 306 (SPDAPREAVVVPPVPDQDHEA) is disordered.

This sequence belongs to the AccD/PCCB family. In terms of assembly, acetyl-CoA carboxylase is a heterohexamer composed of biotin carboxyl carrier protein (AccB), biotin carboxylase (AccC) and two subunits each of ACCase subunit alpha (AccA) and ACCase subunit beta (AccD). Requires Zn(2+) as cofactor.

It localises to the cytoplasm. It carries out the reaction N(6)-carboxybiotinyl-L-lysyl-[protein] + acetyl-CoA = N(6)-biotinyl-L-lysyl-[protein] + malonyl-CoA. Its pathway is lipid metabolism; malonyl-CoA biosynthesis; malonyl-CoA from acetyl-CoA: step 1/1. Functionally, component of the acetyl coenzyme A carboxylase (ACC) complex. Biotin carboxylase (BC) catalyzes the carboxylation of biotin on its carrier protein (BCCP) and then the CO(2) group is transferred by the transcarboxylase to acetyl-CoA to form malonyl-CoA. The protein is Acetyl-coenzyme A carboxylase carboxyl transferase subunit beta of Cronobacter sakazakii (strain ATCC BAA-894) (Enterobacter sakazakii).